The chain runs to 258 residues: MTLIHPTAVIDPKAELDSSVKVGAYTVIGPNVQIGANTEIGPHAVINGHTSIGENNRIFQFASLGEIPQDKKYRDEPTKLIIGNGNTIREFTTFNLGTVTGIGETRIGDDNWIMAYCHLAHDCVVGNHTIFANNASLAGHVTIGDYVVLGGYTLVFQFCRIGDYAMTAFAAGVHKDVPPYFMASGYRAEPAGLNSEGMRRNGFTAEQISAVKDVYKTLYHRGIPFEEAKADILRHAETQAELAVFRDFFAQSARGIIR.

This sequence belongs to the transferase hexapeptide repeat family. LpxA subfamily. In terms of assembly, homotrimer.

It localises to the cytoplasm. It carries out the reaction a (3R)-hydroxyacyl-[ACP] + UDP-N-acetyl-alpha-D-glucosamine = a UDP-3-O-[(3R)-3-hydroxyacyl]-N-acetyl-alpha-D-glucosamine + holo-[ACP]. Its pathway is glycolipid biosynthesis; lipid IV(A) biosynthesis; lipid IV(A) from (3R)-3-hydroxytetradecanoyl-[acyl-carrier-protein] and UDP-N-acetyl-alpha-D-glucosamine: step 1/6. In terms of biological role, involved in the biosynthesis of lipid A, a phosphorylated glycolipid that anchors the lipopolysaccharide to the outer membrane of the cell. In Neisseria meningitidis serogroup C / serotype 2a (strain ATCC 700532 / DSM 15464 / FAM18), this protein is Acyl-[acyl-carrier-protein]--UDP-N-acetylglucosamine O-acyltransferase.